Consider the following 471-residue polypeptide: 3-isopropylmalate dehydratase large subunit (471 aa).

[4Fe-4S] cluster is bound by residues Cys-347, Cys-407, and Cys-410.

It belongs to the aconitase/IPM isomerase family. LeuC type 1 subfamily. Heterodimer of LeuC and LeuD. [4Fe-4S] cluster serves as cofactor.

The catalysed reaction is (2R,3S)-3-isopropylmalate = (2S)-2-isopropylmalate. It functions in the pathway amino-acid biosynthesis; L-leucine biosynthesis; L-leucine from 3-methyl-2-oxobutanoate: step 2/4. Its function is as follows. Catalyzes the isomerization between 2-isopropylmalate and 3-isopropylmalate, via the formation of 2-isopropylmaleate. In Buchnera aphidicola subsp. Acyrthosiphon pisum (strain APS) (Acyrthosiphon pisum symbiotic bacterium), this protein is 3-isopropylmalate dehydratase large subunit.